Consider the following 1006-residue polypeptide: Collagen alpha-2(I) chain (1006 aa).

The segment at 1 to 84 is disordered; that stretch reads SGGFDFSFLP…GFPGTPGLPG (84 aa). Pro10, Pro13, Pro35, and Pro41 each carry 4-hydroxyproline. Over residues 28–64 the composition is skewed to low complexity; that stretch reads LMGPRGPPGASGAPGPQGFQGPAGEPGEPGQTGPAGA. Lys86 carries the 5-hydroxylysine; alternate modification. Lys86 carries an O-linked (Gal...) hydroxylysine; alternate glycan. Positions 99-1006 are disordered; that stretch reads GQPGAAGVKG…FGYEGDFYRA (908 aa). Composition is skewed to low complexity over residues 142–163 and 209–230; these read SRGS…SAGP and PGAN…AGAP. The span at 264 to 273 shows a compositional bias: gly residues; sequence GESGGKGEPG. Over residues 274–284 the composition is skewed to low complexity; that stretch reads SAGPQGPPGSS. Residues 306–315 show a composition bias toward gly residues; sequence GLRGGPGSRG. Residues 328–344 show a composition bias toward low complexity; the sequence is PAGARGASGPAGVRGPS. 2 positions are modified to 4-hydroxyproline: Pro350 and Pro353. Positions 379–398 are enriched in low complexity; that stretch reads LPGIDGRPGPIGPAGARGEA. Gly residues predominate over residues 447 to 456; it reads GVQGGKGEQG. Composition is skewed to low complexity over residues 503–520 and 532–542; these read PGES…SRGP and EPGVVGAPGTA. Positions 543-552 are enriched in gly residues; it reads GPAGSGGLPG. 2 stretches are compositionally biased toward low complexity: residues 585-615 and 622-642; these read AVGA…PRGS and VGPA…QPGA. A compositionally biased stretch (basic and acidic residues) spans 643 to 652; the sequence is KGERGTKGPK. The span at 660-670 shows a compositional bias: low complexity; that stretch reads PTGPVGSAGPA. The segment covering 680–689 has biased composition (gly residues); it reads GSRGDGGPPG. The segment covering 691–700 has biased composition (low complexity); sequence TGFPGAAGRT. The span at 737–746 shows a compositional bias: gly residues; sequence GETGAGGPPG. 2 stretches are compositionally biased toward low complexity: residues 754 to 781 and 789 to 799; these read SGEP…LGLP and LPGVAGAVGEP. Gly residues predominate over residues 800 to 810; it reads GPLGIGPPGAR. Low complexity predominate over residues 837–882; sequence YAGNPGPVGAAGAPGPHGAVGPAGKHGNRGEPGPVGSAGPVGALGP. Over residues 892-903 the composition is skewed to basic and acidic residues; sequence RGDKGEAGDKGP. The span at 976-988 shows a compositional bias: pro residues; it reads SGPPGPPGPPGPP.

The protein belongs to the fibrillar collagen family. As to quaternary structure, trimers of one alpha 2(I) and two alpha 1(I) chains. Interacts (via C-terminus) with TMEM131 (via PapD-L domain); the interaction is direct and is involved in assembly and TRAPPIII ER-to-Golgi transport complex-dependent secretion of collagen. Post-translationally, prolines at the third position of the tripeptide repeating unit (G-X-Y) are hydroxylated in some or all of the chains. Expressed in bones.

The protein resides in the secreted. Its subcellular location is the extracellular space. The protein localises to the extracellular matrix. Functionally, type I collagen is a member of group I collagen (fibrillar forming collagen). This Choloepus hoffmanni (Hoffmann's two-fingered sloth) protein is Collagen alpha-2(I) chain.